Reading from the N-terminus, the 548-residue chain is WEB family protein At1g12150 (548 aa).

A coiled-coil region spans residues 71–544 (KEFMKIKQKL…ELQRWRQQEN (474 aa)). The span at 430–448 (VREEMKMISQKQESKKQDE) shows a compositional bias: basic and acidic residues. The tract at residues 430–455 (VREEMKMISQKQESKKQDEESSGSKI) is disordered.

The protein belongs to the WEB family.

The chain is WEB family protein At1g12150 from Arabidopsis thaliana (Mouse-ear cress).